A 624-amino-acid chain; its full sequence is Probable potassium transport system protein Kup 1 (624 aa).

The next 12 membrane-spanning stretches (helical) occupy residues 10–30, 48–68, 94–114, 133–153, 159–179, 210–230, 242–262, 270–290, 331–351, 363–383, 388–408, and 413–433; these read LALGALGVVFGDIGTSPLYAL, LSLIFWSLIIIVSFKYLMIIF, PLFYIVAIFGAGLLLGDGMLT, LYPYVLPIASVILVLLFSLQA, IGYLFGPLILIWFITIAILGI, FLLGGIFLVVTGGEALFADIG, FFIALPCLLLNYFGQGANLIV, PFFMIAPPWFYLPLIIIATVA, IYVPQINFILFIGTMAFCLAF, IAVNLEMLLVDAMVAYAAVSI, TFNVIFLFGLFLLIDLAFLGA, and FITGGWVPIVLAFFIAFIMYS.

Belongs to the HAK/KUP transporter (TC 2.A.72) family.

Its subcellular location is the cell inner membrane. The enzyme catalyses K(+)(in) + H(+)(in) = K(+)(out) + H(+)(out). Transport of potassium into the cell. Likely operates as a K(+):H(+) symporter. The protein is Probable potassium transport system protein Kup 1 of Legionella pneumophila subsp. pneumophila (strain Philadelphia 1 / ATCC 33152 / DSM 7513).